The sequence spans 252 residues: Tumor necrosis factor ligand superfamily member 15 (252 aa).

The Cytoplasmic segment spans residues 1–39; that stretch reads MAEELGLGFGEGVPVEVLPEGCRHRPEARAGLAARSKAC. The chain crosses the membrane as a helical; Signal-anchor for type II membrane protein span at residues 40-60; sequence LALTCCLLSFPILAGLSTLLM. Over 61–252 the chain is Extracellular; it reads AGQLRVPGKD…DKTFFGAFLL (192 aa). The THD domain occupies 96-252; the sequence is PRAHLTIKKQ…DKTFFGAFLL (157 aa). N137 carries N-linked (GlcNAc...) asparagine glycosylation. C163 and C203 are joined by a disulfide. N-linked (GlcNAc...) asparagine glycosylation is present at N230.

It belongs to the tumor necrosis factor family. In terms of assembly, homotrimer.

It localises to the membrane. Functionally, receptor for TNFRSF25 and TNFRSF6B. Mediates activation of NF-kappa-B. Inhibits vascular endothelial growth and angiogenesis (in vitro). Promotes activation of caspases and apoptosis. Promotes splenocyte alloactivation. The protein is Tumor necrosis factor ligand superfamily member 15 (Tnfsf15) of Mus musculus (Mouse).